The following is an 88-amino-acid chain: Small ribosomal subunit protein uS15 (88 aa).

Belongs to the universal ribosomal protein uS15 family. As to quaternary structure, part of the 30S ribosomal subunit. Forms a bridge to the 50S subunit in the 70S ribosome, contacting the 23S rRNA.

One of the primary rRNA binding proteins, it binds directly to 16S rRNA where it helps nucleate assembly of the platform of the 30S subunit by binding and bridging several RNA helices of the 16S rRNA. Its function is as follows. Forms an intersubunit bridge (bridge B4) with the 23S rRNA of the 50S subunit in the ribosome. The protein is Small ribosomal subunit protein uS15 of Francisella tularensis subsp. novicida (strain U112).